The chain runs to 248 residues: Tropomyosin alpha-4 chain (248 aa).

Alanine 2 carries the N-acetylalanine modification. Residues 2–248 (AGLNSLEAVK…DQTLNELNCI (247 aa)) adopt a coiled-coil conformation. Serine 6 is modified (phosphoserine). Residues 15–47 (QALQQQADEAEDRAQGLQRELDGERERREKAEG) form a disordered region. The span at 33 to 47 (RELDGERERREKAEG) shows a compositional bias: basic and acidic residues. N6-acetyllysine is present on residues lysine 177 and lysine 215. At threonine 216 the chain carries Phosphothreonine.

Belongs to the tropomyosin family. Homodimer. Heterodimer of an alpha (TPM1, TPM3 or TPM4) and a beta (TPM2) chain. As to expression, detected in cardiac tissue and platelets, the form found in cardiac tissue is a higher molecular weight than the form found in platelets. Expressed at higher levels in the platelets of hypertensive patients with cardiac hypertrophy than in the platelets of hypertensive patients without cardiac hypertrophy (at protein level).

The protein localises to the cytoplasm. Its subcellular location is the cytoskeleton. Binds to actin filaments in muscle and non-muscle cells. Plays a central role, in association with the troponin complex, in the calcium dependent regulation of vertebrate striated muscle contraction. Smooth muscle contraction is regulated by interaction with caldesmon. In non-muscle cells is implicated in stabilizing cytoskeleton actin filaments. Binds calcium. Plays a role in platelet biogenesis. This is Tropomyosin alpha-4 chain (TPM4) from Homo sapiens (Human).